The following is a 338-amino-acid chain: MTKTRILLSDSTDPWFNLAVEDTIFRSMPADQRVLFLWRNADTVVIGRAQNPWRECKTDRMEQDKVKLARRQTGGGAVFHDLGNTNFTFMAGKPEYDKEVSTKIVLAGLQKLGIHGVANGRNDLVLEDEQGIRKFSGSAYRETLDRGFHHGTLLLSADLNRLADYLNPDLKKLQAKGITSVKSRVINLNTVKADIEHQQVCEAIMQAYCEHYQQQVEPELISPQSFFDLPGFEQKFAQQSSWDWNFGQTPPFTHHMDERFSWGGVEVYLEVERGTIVQATIFSDMLDPYPMEQLALRLSGLTYNKTALEPCLAQLMQELPQYQLPLEEFQRWFIDQID.

The region spanning 29 to 216 (PADQRVLFLW…AYCEHYQQQV (188 aa)) is the BPL/LPL catalytic domain. ATP is bound by residues R71, 76 to 79 (GAVF), and K134. K134 provides a ligand contact to (R)-lipoate.

This sequence belongs to the LplA family. In terms of assembly, monomer.

It is found in the cytoplasm. The catalysed reaction is L-lysyl-[lipoyl-carrier protein] + (R)-lipoate + ATP = N(6)-[(R)-lipoyl]-L-lysyl-[lipoyl-carrier protein] + AMP + diphosphate + H(+). The protein operates within protein modification; protein lipoylation via exogenous pathway; protein N(6)-(lipoyl)lysine from lipoate: step 1/2. Its pathway is protein modification; protein lipoylation via exogenous pathway; protein N(6)-(lipoyl)lysine from lipoate: step 2/2. Its function is as follows. Catalyzes both the ATP-dependent activation of exogenously supplied lipoate to lipoyl-AMP and the transfer of the activated lipoyl onto the lipoyl domains of lipoate-dependent enzymes. The protein is Lipoate-protein ligase A of Vibrio cholerae serotype O1 (strain ATCC 39541 / Classical Ogawa 395 / O395).